The following is a 290-amino-acid chain: D-tagatose-1,6-bisphosphate aldolase subunit KbaY (290 aa).

The active-site Proton donor is aspartate 82. Zn(2+)-binding residues include histidine 83 and histidine 180. Residue glycine 181 coordinates dihydroxyacetone phosphate. Residue histidine 208 participates in Zn(2+) binding. Dihydroxyacetone phosphate contacts are provided by residues 209–211 (GAS) and 230–233 (NVAT).

The protein belongs to the class II fructose-bisphosphate aldolase family. TagBP aldolase KbaY subfamily. In terms of assembly, homotetramer. Forms a complex with KbaZ. Requires Zn(2+) as cofactor.

The enzyme catalyses D-tagatofuranose 1,6-bisphosphate = D-glyceraldehyde 3-phosphate + dihydroxyacetone phosphate. It functions in the pathway carbohydrate metabolism; D-tagatose 6-phosphate degradation; D-glyceraldehyde 3-phosphate and glycerone phosphate from D-tagatose 6-phosphate: step 2/2. In terms of biological role, catalytic subunit of the tagatose-1,6-bisphosphate aldolase KbaYZ, which catalyzes the reversible aldol condensation of dihydroxyacetone phosphate (DHAP or glycerone-phosphate) with glyceraldehyde 3-phosphate (G3P) to produce tagatose 1,6-bisphosphate (TBP). Requires KbaZ subunit for full activity and stability. This is D-tagatose-1,6-bisphosphate aldolase subunit KbaY from Salmonella arizonae (strain ATCC BAA-731 / CDC346-86 / RSK2980).